Consider the following 185-residue polypeptide: ATP synthase subunit delta (185 aa).

It belongs to the ATPase delta chain family. F-type ATPases have 2 components, F(1) - the catalytic core - and F(0) - the membrane proton channel. F(1) has five subunits: alpha(3), beta(3), gamma(1), delta(1), epsilon(1). F(0) has three main subunits: a(1), b(2) and c(10-14). The alpha and beta chains form an alternating ring which encloses part of the gamma chain. F(1) is attached to F(0) by a central stalk formed by the gamma and epsilon chains, while a peripheral stalk is formed by the delta and b chains.

The protein resides in the cell inner membrane. In terms of biological role, f(1)F(0) ATP synthase produces ATP from ADP in the presence of a proton or sodium gradient. F-type ATPases consist of two structural domains, F(1) containing the extramembraneous catalytic core and F(0) containing the membrane proton channel, linked together by a central stalk and a peripheral stalk. During catalysis, ATP synthesis in the catalytic domain of F(1) is coupled via a rotary mechanism of the central stalk subunits to proton translocation. Its function is as follows. This protein is part of the stalk that links CF(0) to CF(1). It either transmits conformational changes from CF(0) to CF(1) or is implicated in proton conduction. This chain is ATP synthase subunit delta, found in Pelagibacter ubique (strain HTCC1062).